The primary structure comprises 142 residues: Transcription antitermination protein NusB (142 aa).

This sequence belongs to the NusB family.

Functionally, involved in transcription antitermination. Required for transcription of ribosomal RNA (rRNA) genes. Binds specifically to the boxA antiterminator sequence of the ribosomal RNA (rrn) operons. This Borreliella burgdorferi (strain ATCC 35210 / DSM 4680 / CIP 102532 / B31) (Borrelia burgdorferi) protein is Transcription antitermination protein NusB.